The sequence spans 307 residues: Aspartate carbamoyltransferase catalytic subunit (307 aa).

Carbamoyl phosphate-binding residues include arginine 59 and threonine 60. Position 87 (lysine 87) interacts with L-aspartate. 3 residues coordinate carbamoyl phosphate: arginine 109, histidine 139, and glutamine 142. L-aspartate contacts are provided by arginine 172 and arginine 224. Carbamoyl phosphate-binding residues include alanine 265 and proline 266.

Belongs to the aspartate/ornithine carbamoyltransferase superfamily. ATCase family. As to quaternary structure, heterododecamer (2C3:3R2) of six catalytic PyrB chains organized as two trimers (C3), and six regulatory PyrI chains organized as three dimers (R2).

The catalysed reaction is carbamoyl phosphate + L-aspartate = N-carbamoyl-L-aspartate + phosphate + H(+). The protein operates within pyrimidine metabolism; UMP biosynthesis via de novo pathway; (S)-dihydroorotate from bicarbonate: step 2/3. Functionally, catalyzes the condensation of carbamoyl phosphate and aspartate to form carbamoyl aspartate and inorganic phosphate, the committed step in the de novo pyrimidine nucleotide biosynthesis pathway. This is Aspartate carbamoyltransferase catalytic subunit from Streptococcus agalactiae serotype Ia (strain ATCC 27591 / A909 / CDC SS700).